The following is a 424-amino-acid chain: Dihydroorotase (424 aa).

Zn(2+) is bound by residues His60 and His62. Substrate is bound by residues 62-64 (HFR) and Asn94. Residues Asp151, His178, and His231 each coordinate Zn(2+). Asn277 contacts substrate. Asp304 serves as a coordination point for Zn(2+). The active site involves Asp304. His308 contacts substrate.

The protein belongs to the metallo-dependent hydrolases superfamily. DHOase family. Class I DHOase subfamily. The cofactor is Zn(2+).

The enzyme catalyses (S)-dihydroorotate + H2O = N-carbamoyl-L-aspartate + H(+). Its pathway is pyrimidine metabolism; UMP biosynthesis via de novo pathway; (S)-dihydroorotate from bicarbonate: step 3/3. Its function is as follows. Catalyzes the reversible cyclization of carbamoyl aspartate to dihydroorotate. The chain is Dihydroorotase from Clostridium acetobutylicum (strain ATCC 824 / DSM 792 / JCM 1419 / IAM 19013 / LMG 5710 / NBRC 13948 / NRRL B-527 / VKM B-1787 / 2291 / W).